The sequence spans 168 residues: tRNA-splicing endonuclease (168 aa).

Catalysis depends on residues Y107, H114, and K145.

This sequence belongs to the tRNA-intron endonuclease family. Archaeal short subfamily. In terms of assembly, homotetramer; although the tetramer contains four active sites, only two participate in the cleavage. Therefore, it should be considered as a dimer of dimers.

It carries out the reaction pretRNA = a 3'-half-tRNA molecule with a 5'-OH end + a 5'-half-tRNA molecule with a 2',3'-cyclic phosphate end + an intron with a 2',3'-cyclic phosphate and a 5'-hydroxyl terminus.. In terms of biological role, endonuclease that removes tRNA introns. Cleaves pre-tRNA at the 5'- and 3'-splice sites to release the intron. The products are an intron and two tRNA half-molecules bearing 2',3' cyclic phosphate and 5'-OH termini. Recognizes a pseudosymmetric substrate in which 2 bulged loops of 3 bases are separated by a stem of 4 bp. This chain is tRNA-splicing endonuclease, found in Thermococcus kodakarensis (strain ATCC BAA-918 / JCM 12380 / KOD1) (Pyrococcus kodakaraensis (strain KOD1)).